A 227-amino-acid polypeptide reads, in one-letter code: Phosphoglycolate phosphatase (227 aa).

Asp-8 acts as the Nucleophile in catalysis. Mg(2+) contacts are provided by Asp-8 and Asp-10. Lys-152 provides a ligand contact to substrate. Residues Asp-175 and Asp-179 each contribute to the Mg(2+) site.

It belongs to the archaeal SPP-like hydrolase family. Mg(2+) serves as cofactor.

It catalyses the reaction 2-phosphoglycolate + H2O = glycolate + phosphate. Catalyzes the dephosphorylation of 2-phosphoglycolate. The protein is Phosphoglycolate phosphatase of Halorubrum lacusprofundi (strain ATCC 49239 / DSM 5036 / JCM 8891 / ACAM 34).